The primary structure comprises 309 residues: D-alanine--D-alanine ligase (309 aa).

Positions Lys-106–Glu-305 constitute an ATP-grasp domain. Val-136–Thr-191 is a binding site for ATP. Mg(2+) is bound by residues Asp-259, Glu-272, and Asn-274.

It belongs to the D-alanine--D-alanine ligase family. It depends on Mg(2+) as a cofactor. Requires Mn(2+) as cofactor.

It is found in the cytoplasm. It carries out the reaction 2 D-alanine + ATP = D-alanyl-D-alanine + ADP + phosphate + H(+). The protein operates within cell wall biogenesis; peptidoglycan biosynthesis. Cell wall formation. This chain is D-alanine--D-alanine ligase, found in Pasteurella multocida (strain Pm70).